We begin with the raw amino-acid sequence, 422 residues long: Acetyl-CoA acetyltransferase, mitochondrial (422 aa).

The N-terminal 28 residues, 1–28, are a transit peptide targeting the mitochondrion; sequence MPVLAALLRRGPLLQRRVQEIRYAERSY. Lys-61 bears the N6-acetyllysine; alternate mark. Lys-61 carries the N6-succinyllysine; alternate modification. Lys-73 is modified (N6-succinyllysine). Cys-121 (acyl-thioester intermediate) is an active-site residue. 4 positions are modified to N6-acetyllysine; alternate: Lys-169, Lys-176, Lys-185, and Lys-197. Lys-169, Lys-176, Lys-185, and Lys-197 each carry N6-succinyllysine; alternate. Tyr-214 lines the CoA pocket. Tyr-214 is a binding site for K(+). Lys-218 carries the post-translational modification N6-acetyllysine; alternate. Lys-218 is modified (N6-succinyllysine; alternate). Lys-238 is modified (N6-succinyllysine). Lys-240 carries the post-translational modification N6-acetyllysine; alternate. Residue Lys-240 is modified to N6-succinyllysine; alternate. N6-acetyllysine occurs at positions 246 and 252. CoA-binding positions include 253–255 and Lys-258; that span reads RVD. Lys-258 is modified (N6-acetyllysine; alternate). The residue at position 258 (Lys-258) is an N6-succinyllysine; alternate. N6-succinyllysine is present on residues Lys-261 and Lys-263. 3 residues coordinate K(+): Ala-275, Ala-276, and Ala-278. Ser-279 provides a ligand contact to CoA. Lys-333 is modified (N6-acetyllysine). Val-376 provides a ligand contact to K(+). Cys-408 acts as the Proton donor/acceptor in catalysis.

The protein belongs to the thiolase-like superfamily. Thiolase family. As to quaternary structure, homotetramer. Post-translationally, succinylation at Lys-263, adjacent to a coenzyme A binding site. Desuccinylated by SIRT5.

It is found in the mitochondrion. It carries out the reaction 2 acetyl-CoA = acetoacetyl-CoA + CoA. It catalyses the reaction propanoyl-CoA + acetyl-CoA = 2-methyl-3-oxobutanoyl-CoA + CoA. The protein operates within lipid metabolism; fatty acid beta-oxidation. Its activity is regulated as follows. Activated by potassium ions, but not sodium ions. Functionally, this is one of the enzymes that catalyzes the last step of the mitochondrial beta-oxidation pathway, an aerobic process breaking down fatty acids into acetyl-CoA. Using free coenzyme A/CoA, catalyzes the thiolytic cleavage of medium- to long-chain 3-oxoacyl-CoAs into acetyl-CoA and a fatty acyl-CoA shortened by two carbon atoms. The activity of the enzyme is reversible and it can also catalyze the condensation of two acetyl-CoA molecules into acetoacetyl-CoA. Thereby, it plays a major role in ketone body metabolism. The polypeptide is Acetyl-CoA acetyltransferase, mitochondrial (ACAT1) (Bos taurus (Bovine)).